Consider the following 179-residue polypeptide: ATP synthase subunit delta (179 aa).

This sequence belongs to the ATPase delta chain family. F-type ATPases have 2 components, F(1) - the catalytic core - and F(0) - the membrane proton channel. F(1) has five subunits: alpha(3), beta(3), gamma(1), delta(1), epsilon(1). F(0) has three main subunits: a(1), b(2) and c(10-14). The alpha and beta chains form an alternating ring which encloses part of the gamma chain. F(1) is attached to F(0) by a central stalk formed by the gamma and epsilon chains, while a peripheral stalk is formed by the delta and b chains.

The protein resides in the cell membrane. Its function is as follows. F(1)F(0) ATP synthase produces ATP from ADP in the presence of a proton or sodium gradient. F-type ATPases consist of two structural domains, F(1) containing the extramembraneous catalytic core and F(0) containing the membrane proton channel, linked together by a central stalk and a peripheral stalk. During catalysis, ATP synthesis in the catalytic domain of F(1) is coupled via a rotary mechanism of the central stalk subunits to proton translocation. In terms of biological role, this protein is part of the stalk that links CF(0) to CF(1). It either transmits conformational changes from CF(0) to CF(1) or is implicated in proton conduction. In Ureaplasma parvum serovar 3 (strain ATCC 27815 / 27 / NCTC 11736), this protein is ATP synthase subunit delta.